Consider the following 795-residue polypeptide: Phenylalanine--tRNA ligase beta subunit (795 aa).

The 110-residue stretch at 39–148 folds into the tRNA-binding domain; that stretch reads AGRFTGVVVG…AEAPIGQDIR (110 aa). A B5 domain is found at 401–476; it reads PQPATITLRR…RVYGYDAIPN (76 aa). The Mg(2+) site is built by Asp-454, Asp-460, Glu-463, and Glu-464. An FDX-ACB domain is found at 701–794; that stretch reads SRFPANRRDI…LKQRFQASLR (94 aa).

It belongs to the phenylalanyl-tRNA synthetase beta subunit family. Type 1 subfamily. As to quaternary structure, tetramer of two alpha and two beta subunits. It depends on Mg(2+) as a cofactor.

Its subcellular location is the cytoplasm. It carries out the reaction tRNA(Phe) + L-phenylalanine + ATP = L-phenylalanyl-tRNA(Phe) + AMP + diphosphate + H(+). The polypeptide is Phenylalanine--tRNA ligase beta subunit (Sodalis glossinidius (strain morsitans)).